Reading from the N-terminus, the 4017-residue chain is MSAADQEPIAVIGMACRFPGGSNSPSKLWELLKAPHDIAKPIPDDRFDSTGFFHKNGSHHGATDCREAYFLDEDVTRFDNAFFNVQPGEAEALDPQQRFLMETIYDSLCSAGQTIEGLRGSRAAVYVGLMCDDWSQMNGRDWDLVPTYAATGTSRAVVSNRVSYFFDWHGPSMTIDTACSSSLVAVHEGVNALRRGESPIVVAAGANMILSPGMMIAESNLHMLSPTGRSKMWDASADGYARGEGIAAVVLKPLSAALRDGDPINCVIRGTGVNQDGRTPGLTMPNNVAQADLIRDTYERAGLNIQDPKDRPQFFHAHGTGTPAGDPQEAEAISRAFYEGGSVKDPLFVGSIKTVIGHTEGTAGLASLIGTALAMQNNTIPPNLHFNTLSPRVAEFCDNLRIPTKALPWPTPVAGQPRRASVNSFGFGGTNAHAIIESYEAAPTEQRTVSTKVPAFTPLTISAASASALRTTLSDLSAYVLSHPDTDLRDLAYTFQHRRSTLAFRKAIATDNRDALVGTIDALLNEGGAGDGGLTARYFDSPDPKILGVFTGQGAQWPRMGALLLEQSPYVGELLTQLDQALATLPEGDRPDWTLREQILAEAAQSRLSEAAISQPLCTAVQIALVDLLGLAGIRLRGVVGHSSGEIAAAYASGYLSATDAIRVAYYRGLYAKLAGSPAGRGSMLAVGTSFEDAVEFCELEEFEGRIKVAARNSSNSVTLSGDEDAIEEALEIYKDEGRFARQLRVDTAYHSHHMEPCAVPYRDALTRCEIKVGEGNGIPWYSSVIEGHVMAPTDVSPQYWVDNMTSAVLFSPAVAHAVAEGGPFDLGVEVGPHPALKGPCLDTVEEAAGHRIPYTGLLGRNKNDVVELSSALGFIWTQLGAASVDFDRLERAISGNPYPKKVVDDLPTYPFDHSRSFYTLTRFSGAHRNMHAPPNPILGRRCVETETADEVSWRNILKSGEISWLQGHQLQGQTVFPAMGYIAMCVEAAAVLAGPERPLGLVTLEDVIIGRALAFQNESVGMESKVTVKIDHTSDDELRGHIACHSGLPFDSAAPLALNFSATLHVRFHEPRADTLPAVRADEISLVKTDPGRLYSQFTQLGYNYSPPFTGVKAIQRKRGFATGDIEDISGEGWEDQLIVHPGWLDSALQTAFAAYSYPHDNRLWALHVPTEIRTVSINPYFTERGAGGRTRQLQYQSTAREGLGAPVAADIDVFAAGEEDGHAFIQLEAVQVKPFAAATARDDALLFARFDYRLANPDAIAAVEGDDLLPPKTEAVVETIERVGFYYLRRVHETVTPAERRPTLPHFRHLIDLCGRVVPLVAAGEHPHVPREAINDSASYIRSLIARYHDRADIQLLEAVGENLVGEIRRNGIMLEHMMKDGILDRFYEELAGLDVANVWIARMVAQVAHRHPHLRILEIGAGTGGTTRTVLPMLGDAFQSYTFTDISAGFFGSAQERFRTYADRMVFATYNMELTPEEQGFEEGTYDVVLASNVLHATGRLDDMMANTRRLLRPGGYLMMLEFVSNDRTGITACMGGLPGWWGNGIVDPARGDGPCLTPAQWDELVRRHGFSGVDTHCPVEKHLQWYTVHLCQAVDDRVLALRNPLESLESAATLAPPPAELVIVGGTTATVSKLIDEASTLLAPRYNTISRVATLEELDQRGLPLGSSVLSLTELDHQFFEHRTAAKLEALKALWRAGGSIIWATRGVRDASPYSAMILGLARVVRFEYPNINLQILDFDRAPDAATLAADLVRLEMGRHWKEEGANILYSVEPEAHYENGALFIPRMYPDRDANARYNTQRRTVAREVDPRETSVVLEPAGPVGGALELCAPSPLRVAPAARPGAEKTVEVIVEQSVLHAVKVPDAGFFSLCAGTDAETGRPLLALVDSPVESRLRVPVEWTVSLREPLSRTGAFSLGDVASHLVASAILAGAPAFGSLLIHEADESLKEAFGRQAAGHGAHVVFTTADKAKARAGADWVLVHEKLPGRLVQRLLPHDISSFTDLSHSEGSASAQLIVHSLPVYSPITTVKDVIRAQAGAFPDAAPQDVGAALKAAWQAASRKRKGSGNKSQTSAIPVLPLQDVSRAGARHAPLTVVDWNTNSVSVALRPIDAGTIFRSDGTYFLVGLSGEVGQSLCQWMVAHGARHIVLSSRRPKVHPRYIEDLAALGATVRVMALDITNREALRACYDTXXXXXXXXXXXXXXXXXXXXXXXXXXXXXXXXXXXXXXXXXXXXXXXXXXXXXXXXXXXXXXXXXXXXXXXXXXXXXXXXXXXXXXXXXXXXXXXXXXXXXXXXXXXXXXXXXXXXXXXXXXXXXXXXXXXXXXXXXXXXXXXXXXXXXXXXXXXXXXXXXXXXXXXXXXXXXXXXXXXXXXXXXXXXXXXXXXXXXXXXXXXXXXXXXXXXXXXXXXXXXXXXXXAVVQDSLTENLIRILMMPATETVDPMMSLVELGIDSIMAVDLRTWFLKELDVDVPVLKILSPGETVKSLAEEAMAKIPAEIVDLSKLAEGSADVSGAPAPAAVQPVQPAPVPVPVPVTKKAIDQVSEASGVSATTPSTRAETDASSSPALVSTPGTSLERPDQEEDKQLFQPPPRPKPTTLQHRLPRQAYWAGSASTTSPKPSRRAAQRHETLRTRFFWSTDDSRTPMQGILSQTLVRLETATIETEAQASEELEAMRKYEWNLGDWVPLRIKLLTLSETSHYLILGSHHISMDGHSFSVFLLDIHQAYNNPARPLPPMPSTSQARAFGAHQIAAYESGQMRPAIEHYKTTLPAADLARPIELFPFARTKVRPPLDRYGTHVARAHLGPDTTAKLKTLARGRRATSFHAYLGALQALLFRLLPADTTERVYIGIADANRLDSRFAASVGNFLNVLPLRFDRDAATFGQAIETARDKARDALKHSALPFDLLLDEVGVPRSPTLLIRCIVFMNYRLVVKEHADKQWIGCRIGEERWHTARTGYDVALEIVEDHDGATLAMHVQQSLYDADAAELLVRSFANAVKEFAAKGDAMETEKLQKWDKVDVEKALEIGTGPALNLKWPATVAHRIDEVIAQNPTAVALKDGLGNVLTYAQMDARVESIANALNVRLPNNADGKAPVVGVFQAPSADWICSLVAIHRVGAVYLPLDLRNSIPRLKSNVAVARPAALLVDAETASRVGELEIKDAVPAIDVSRLAADTKGKKPTNTAAARADQPAYIIFTSGSTGEPKGIVVTHAGLRNNLEGYHNAWNIPSLAGVVLQQVSFGFDALSASDLCLRXXXXXXXXXXLMVDHGVTMTQATPSEYEMWLRFAPDQLRRCTSWKAAWFGGERAAPGLVRSFRDLCVALPNLNVYTSYGPTESTISAMKGVADVRNDPTLTVPVPGRLLPNYTAYLVDDEMRPLPIGVPGEILLGGAGVGKNEYLGRPDLTTQAFLSSPFPVPGDGGKPARLYRTGDYGRLDKSGFLAIEGRIAGDTQVKLRGFRIELAEIERVMLRESDGQLAQVVVTARGVDDGEAEGFLAAHVVLESQSTDAAATAQVINRLRSRLPLSLPQYMCPAIIVPLAKLPLTSNDKVDRRAVQALSLPKTTTASTTADGTQPAQPLTPTESRLATLWAGVLPQRGGGVLQPRSDFFTAGGNSLLLVKLQAAIKREFGDAPRLSKLMSATELGSMAALLDQAGATALDWERETALDLPQGVTAPAKARENGAGLRVLVTGASGSLGKRIVRRLVGDNRVATVVCLVRPTEGRDPSTLFFAAGQADNAKIRTILADLPTIPTTHPDLDPAIIDAVIHCAADRSFWDGYSAVSLSTSTRSRPRCSLLTAGAHLHALSSGALGAFEDPNTYNTKSTLPRPSPTDGYLASKWVAERYLARAVREAGLRATAHRPSGAVPASEREGKEVLAAMAGDMLRLSASLGVRPDYARLSGSFDVGRLEDVAAAVVGEVTGGLGGQGGEEGMGVVEYPGMASVQIRELAEYAEMLLKNGGAEAEAVKGLPMVPALHWVGLAKRAGLFEWLLTAQHLVVDDEEGRKIVSRR.

Residues glutamine 6–serine 438 enclose the Ketosynthase family 3 (KS3) domain. Residues cysteine 179, histidine 318, and histidine 358 each act as for beta-ketoacyl synthase activity in the active site. The segment at valine 549–leucine 869 is malonyl-CoA:ACP transacylase (MAT) domain. The tract at residues asparagine 936 to proline 1072 is N-terminal hotdog fold. The 308-residue stretch at asparagine 936–arginine 1243 folds into the PKS/mFAS DH domain. The segment at proline 937 to alanine 1240 is dehydratase (DH) domain. Histidine 969 (proton acceptor; for dehydratase activity) is an active-site residue. A C-terminal hotdog fold region spans residues leucine 1087 to arginine 1243. Aspartate 1147 (proton donor; for dehydratase activity) is an active-site residue. Residues valine 1398–lysine 1585 are methyltransferase (MT) domain. Residues threonine 2127–residue 2300 are ketoreductase (KR)domain. In terms of domain architecture, Carrier 1 spans alanine 2423–isoleucine 2499. Serine 2458 carries the post-translational modification O-(pantetheine 4'-phosphoryl)serine. Disordered stretches follow at residues valine 2547–arginine 2606 and tryptophan 2613–histidine 2632. Over residues serine 2548–threonine 2578 the composition is skewed to polar residues. Residues arginine 2626–glutamine 3020 form a condensation region. Residues glutamate 3053–isoleucine 3453 are adenylation. Residues proline 3567–threonine 3586 are disordered. Residues threonine 3569–threonine 3579 show a composition bias toward low complexity. The Carrier 2 domain occupies glutamine 3583 to glycine 3661. Residues threonine 3588–aspartate 3658 are thiolation. Serine 3621 bears the O-(pantetheine 4'-phosphoryl)serine mark. The interval valine 3696–alanine 3920 is reductase-like.

In the C-terminal section; belongs to the NRP synthetase family.

The enzyme catalyses (2S,4S)-4-hydroxy-4-methylglutamate + 8 malonyl-CoA + 3 S-adenosyl-L-methionine + ATP + 8 NADPH + 11 H(+) = (2S)-3-[(2S)-3,5-dioxo-4-[(2E,4R,6R,8E,10E,12E)-4,6,12-trimethyltetradeca-2,8,10,12-tetraenoyl]pyrrolidin-2-yl]-2-hydroxy-2-methylpropanoate + AMP + 3 S-adenosyl-L-homocysteine + 8 CO2 + diphosphate + 8 NADP(+) + 8 CoA + 6 H2O. It functions in the pathway secondary metabolite biosynthesis. Hybrid PKS-NRPS synthetase; part of the gene cluster that mediates the biosynthesis of the tetramic acid Sch210972, a potential anti-HIV fungal natural product that contains a decalin core. The PKS module of cghG together with the enoylreductase cghC catalyze the formation of the polyketide unit which is then conjugated to 4-hydroxyl-4-methyl glutamate (HMG) by the condensation domain of the cghG NRPS module. One unique structural feature of Sch210972 is the tetramic acid motif proposed to be derived from the non-proteinogenic amino acid HMG, by a Dieckmann-type condensation catalyzed by the reductase domain of cghG. The aldolase cghB catalyzes the aldol condensation of 2 molecules of pyruvic acid to yield the intermediate 4-hydroxyl-4-methyl-2-oxoglutarate (HMOG), which can then be stereoselectively transaminated by an unidentified enzyme to form HMG. The Diels-Alderase cghA then uses the Dieckmann product released by cghG as substrate and catalyzes the Diels-Alder cycloaddition to form the decalin ring of Sch210972. CghA also suppresses the nonenzymatic formation of the alternative stereoisomer. In Chaetomium globosum (strain ATCC 6205 / CBS 148.51 / DSM 1962 / NBRC 6347 / NRRL 1970) (Soil fungus), this protein is Hybrid PKS-NRPS synthetase cghG.